Here is a 1501-residue protein sequence, read N- to C-terminus: MGGLAWGPSRAAGSSWVNASGTWEQPLRGFSGLQGGRRRGRGEKGIPEEPLCQLTPQLGLSLRVPFGLGDYGLDMPGPQPSAASQTTGAVACLAEVLLWVGGSVVVSPRWQLSLVVERCMSAMQEGTQMVKLRGSSKGLVRFYYLDEHRSCLRWRPSRKNEKAKISIDSIQEVSEGRQSEIFQRYPDSSFDPNCCFSIYHGSHRESLDLVSPSSEEARTWVTGLRYLMAGISDEDSLARRQRTRDQWLKQTFDEADKNGDGSLSISEVLQLLHKLNVNLPRQRVKQMFREADTDDHQGTLGFEEFCAFYKMMSTRRDLYLLMLTYSNHKDHLDASDLQRFLEVEQKMNGVTLESCQNIIEQFEPCLENKSKGMLGIDGFTNYTRSPAGDIFNPEHNRVHQDMTQPLSHYFITSSHNTYLVGDQLMSQSRVDMYAWVLQAGCRCVEVDCWDGPDGEPIVHHGYTLTSKILFKDVIETINKYAFIKNEYPVILSIENHCSVVQQKKMAQYLTDILGDKLDLSSVSSEDATMLPSPQMLKGKILVKGKKLPANISEDAEEGEVSDEDSADEMEDDCKLLNGDASTNRKRVENIAKKKLDSLIKESKIRDCEDPNDFSVSTLSPSGKLGRKAEAKKGQSKVEEDVEAGEDSGVSRQNSRLFMSSFSKRKKKGSKIKKVASVEEGDETLDSPGSQSRGTARQKKTMKLSRALSDLVKYTKSVGTHDVEIEVVSSWQVSSFSETKAHQILQQKPTQYLRFNQHQLSRIYPSSYRVDSSNYNPQPFWNAGCQMVALNYQSEGRMLQLNRAKFSANGDCGYVLKPQCMCQGVFNPNSEDPLPGQLKKQLALRIISGQQLPKPRDSVLGDRGEIIDPFVEVEVIGLPVDCSKEQTRVVDDNGFNPMWEETLVFTVHMPEIALVRFLVWDHDPIGRDFIGQRTLAFSSIMPGYRHVYLEGMEEASIFVHVAVSDISGKVKQTLGLKGLFLRGTKPGSLDSHAAGQPLPRPSVSQRLLRRTASAPTKSQKPSRKGFPELALGTQDAGSEGAADDVAPSSPNPALEAPTQERSGSSSPRDTRLFPLQRPISPLCSLEPIAEEPALGPGLPLQAAAPTGPSQEGSQCPVGLGAKVTSSQQTSLGAFGTLQLRIGGGRENEEPPLRPHNGGISSGPREGTSGRQTDSKSRSRVPGHLPVVRRAKSEGQVLSELSPTPAVYSDATGTDRLWQRLEPGSHRDSVSSSSSMSSNDTVIDLSLPSLGLCRSRESIPGVSLGRLTSRPCLASAARPDLPPVTKSKSNPNLRVAGGLPTAPDELQPRPLAPRLTGHHPRPPWHHLTLVGLRDCPVSAKSKSLGDLTADDFAPSFQGSTSSLSCGLGSLGVAHQVLEPGIRRDALTEQLRWLTGFQQAGDITSPTSLGPAGDGSVGGPSFLRRSSSRSQSRVRAIASRARQAQERQQRLRGQDSRGPPEEERGTPEGACSVGHEGCVDVPMPAKGAPEQVCGAADGQLLLRL.

The disordered stretch occupies residues 28 to 47; that stretch reads RGFSGLQGGRRRGRGEKGIP. The interval 75–229 is necessary for plasma membrane localization; sequence MPGPQPSAAS…WVTGLRYLMA (155 aa). The 109-residue stretch at 121–229 folds into the PH domain; it reads SAMQEGTQMV…WVTGLRYLMA (109 aa). EF-hand domains are found at residues 243–278 and 279–315; these read TRDQ…LNVN and LPRQ…MSTR. Positions 256, 258, 260, 262, and 267 each coordinate Ca(2+). In terms of domain architecture, PI-PLC X-box spans 400 to 545; it reads QDMTQPLSHY…LKGKILVKGK (146 aa). H415 is a catalytic residue. 3 residues coordinate Ca(2+): N416, E445, and D447. The active site involves H459. E494 contacts Ca(2+). Positions 543 and 545 each coordinate substrate. Disordered regions lie at residues 551-570 and 609-700; these read ISED…DEME and DPND…QKKT. Residues 553 to 570 are compositionally biased toward acidic residues; that stretch reads EDAEEGEVSDEDSADEME. Phosphoserine occurs at positions 561 and 565. Over residues 626–638 the composition is skewed to basic and acidic residues; it reads RKAEAKKGQSKVE. The span at 662-673 shows a compositional bias: basic residues; that stretch reads SKRKKKGSKIKK. Phosphoserine is present on residues S676 and S686. The 115-residue stretch at 707 to 821 folds into the PI-PLC Y-box domain; that stretch reads LSDLVKYTKS…GYVLKPQCMC (115 aa). Residues S734 and R761 each contribute to the substrate site. The region spanning 821–950 is the C2 domain; the sequence is CQGVFNPNSE…PGYRHVYLEG (130 aa). Ca(2+)-binding residues include I865, D867, D891, D920, H921, and D922. Disordered stretches follow at residues 986–1073, 1089–1238, 1273–1305, and 1398–1469; these read GSLD…RLFP, EEPA…SSND, SAAR…DELQ, and GDIT…GACS. A compositionally biased stretch (low complexity) spans 1089–1107; the sequence is EEPALGPGLPLQAAAPTGP. Basic and acidic residues-rich tracts occupy residues 1142-1151 and 1215-1227; these read GGRENEEPPL and LWQR…HRDS. Over residues 1421–1439 the composition is skewed to low complexity; sequence RRSSSRSQSRVRAIASRAR. Positions 1440–1463 are enriched in basic and acidic residues; sequence QAQERQQRLRGQDSRGPPEEERGT.

Ca(2+) serves as cofactor. Specifically detected in the brain, with higher level in cerebral cortex, olfactory bulb and hippocampus (at protein level). Expressed in the pyramidal cells of the hippocampus, but also in eye and lung.

It localises to the cytoplasm. The protein resides in the cell membrane. The enzyme catalyses a 1,2-diacyl-sn-glycero-3-phospho-(1D-myo-inositol-4,5-bisphosphate) + H2O = 1D-myo-inositol 1,4,5-trisphosphate + a 1,2-diacyl-sn-glycerol + H(+). Activity is stimulated by GNB1:GNG2. The production of the second messenger molecules diacylglycerol (DAG) and inositol 1,4,5-trisphosphate (IP3) is mediated by activated phosphatidylinositol-specific phospholipase C enzymes. This phospholipase activity is very sensitive to calcium. May be important for formation and maintenance of the neuronal network in the postnatal brain. The chain is 1-phosphatidylinositol 4,5-bisphosphate phosphodiesterase eta-2 from Mus musculus (Mouse).